Consider the following 115-residue polypeptide: Pro-neuregulin-4, membrane-bound isoform (115 aa).

Residues 1-62 (MPTDHEEPCG…SSIQTKSNLF (62 aa)) are Extracellular-facing. The 42-residue stretch at 5 to 46 (HEEPCGPSHKSFCLNGGLCYVIPTIPSPFCRCVENYTGARCE) folds into the EGF-like domain. 3 disulfide bridges follow: C9–C23, C17–C34, and C36–C45. An N-linked (GlcNAc...) asparagine glycan is attached at N39. Residues 63–83 (EAFVALAVLVTLIIGAFYFLC) form a helical membrane-spanning segment. At 84-115 (RKGHFQRASSVQYDINLVETSSTSAHHSHEQH) the chain is on the cytoplasmic side.

Belongs to the neuregulin family. Interacts with ERBB4. In terms of processing, proteolytic cleavage close to the plasma membrane on the external face leads to the release of the soluble growth factor form. Extensive glycosylation precedes the proteolytic cleavage.

It localises to the cell membrane. It is found in the secreted. In terms of biological role, low affinity ligand for the ERBB4 tyrosine kinase receptor. Concomitantly recruits ERBB1 and ERBB2 coreceptors, resulting in ligand-stimulated tyrosine phosphorylation and activation of the ERBB receptors. Does not bind to the ERBB1, ERBB2 and ERBB3 receptors. This is Pro-neuregulin-4, membrane-bound isoform (NRG4) from Homo sapiens (Human).